We begin with the raw amino-acid sequence, 186 residues long: Elongation factor P (186 aa).

The protein belongs to the elongation factor P family.

It localises to the cytoplasm. The protein operates within protein biosynthesis; polypeptide chain elongation. In terms of biological role, involved in peptide bond synthesis. Stimulates efficient translation and peptide-bond synthesis on native or reconstituted 70S ribosomes in vitro. Probably functions indirectly by altering the affinity of the ribosome for aminoacyl-tRNA, thus increasing their reactivity as acceptors for peptidyl transferase. This Synechococcus sp. (strain CC9902) protein is Elongation factor P.